Consider the following 243-residue polypeptide: Pleckstrin homology domain-containing family B member 1 (243 aa).

The region spanning 21-128 (ALVRGGWLWR…WKTALMEANS (108 aa)) is the PH domain.

Binds transducins. Homodimer. Interacts (via PH domain) with MYO1C. Interacts (via PH domain) with MYO7A. Highly expressed in retina and brain. In retina, abundantly expressed in photoreceptors. Isoform 4 is the predominant isoform expressed in mature olfactory receptor neurons and vestibular and cochlear hair cells. Also expressed in cells with possible sensory function, including peripheral retinal ganglion cells, cochlear interdental cells, and neurons of the circumventricular organ (at protein level).

It is found in the membrane. It localises to the cytoplasm. This Mus musculus (Mouse) protein is Pleckstrin homology domain-containing family B member 1 (Plekhb1).